The chain runs to 152 residues: SKP1-like protein 10 (152 aa).

An interaction with the F-box domain of F-box proteins region spans residues 94–152 (IMAANYLNIKSLLDLACQTVADMIKDNTVEHTRKFFNIENDYTHEEEEAVRRENQWGFE).

It belongs to the SKP1 family. In terms of assembly, part of a SCF (SKP1-cullin-F-box) protein ligase complex. Interacts with CPR1/CPR30. In terms of tissue distribution, expressed in young seedlings, roots, leaves, floral stems, inflorescences, and siliques.

The protein localises to the nucleus. It participates in protein modification; protein ubiquitination. Its function is as follows. Involved in ubiquitination and subsequent proteasomal degradation of target proteins. Together with CUL1, RBX1 and a F-box protein, it forms a SCF E3 ubiquitin ligase complex. The functional specificity of this complex depends on the type of F-box protein. In the SCF complex, it serves as an adapter that links the F-box protein to CUL1. This chain is SKP1-like protein 10 (ASK10), found in Arabidopsis thaliana (Mouse-ear cress).